Reading from the N-terminus, the 481-residue chain is Delta(14)-sterol reductase ERG24B (481 aa).

8 consecutive transmembrane segments (helical) span residues 11-31, 80-100, 125-145, 149-169, 244-264, 279-299, 313-333, and 427-447; these read FGGP…MQVL, LFAY…QIVL, LTGC…WTWI, YIQL…WTYL, TYGF…YYVL, ITSD…VPFL, HLGP…LYIF, and AAPW…FLLI.

Belongs to the ERG4/ERG24 family.

It localises to the endoplasmic reticulum membrane. It carries out the reaction 4,4-dimethyl-5alpha-cholesta-8,24-dien-3beta-ol + NADP(+) = 4,4-dimethyl-5alpha-cholesta-8,14,24-trien-3beta-ol + NADPH + H(+). It participates in steroid metabolism; ergosterol biosynthesis. Delta(14)-sterol reductase; part of the third module of ergosterol biosynthesis pathway that includes the late steps of the pathway. Catalyzes the reduction of the C14=C15 double bond within 4,4,24-trimethyl ergosta-8,14,24(28)-trienolto produce 4,4-dimethylfecosterol. The third module or late pathway involves the ergosterol synthesis itself through consecutive reactions that mainly occur in the endoplasmic reticulum (ER) membrane. Firstly, the squalene synthase ERG9 catalyzes the condensation of 2 farnesyl pyrophosphate moieties to form squalene, which is the precursor of all steroids. Squalene synthase is crucial for balancing the incorporation of farnesyl diphosphate (FPP) into sterol and nonsterol isoprene synthesis. Secondly, squalene is converted into lanosterol by the consecutive action of the squalene epoxidase ERG1 and the lanosterol synthase ERG7. Then, the delta(24)-sterol C-methyltransferase ERG6 methylates lanosterol at C-24 to produce eburicol. Eburicol is the substrate of the sterol 14-alpha demethylase encoded by CYP51A, CYP51B and CYP51C, to yield 4,4,24-trimethyl ergosta-8,14,24(28)-trienol. CYP51B encodes the enzyme primarily responsible for sterol 14-alpha-demethylation, and plays an essential role in ascospore formation. CYP51A encodes an additional sterol 14-alpha-demethylase, induced on ergosterol depletion and responsible for the intrinsic variation in azole sensitivity. The third CYP51 isoform, CYP51C, does not encode a sterol 14-alpha-demethylase, but is required for full virulence on host wheat ears. The C-14 reductase ERG24 then reduces the C14=C15 double bond which leads to 4,4-dimethylfecosterol. A sequence of further demethylations at C-4, involving the C-4 demethylation complex containing the C-4 methylsterol oxidases ERG25, the sterol-4-alpha-carboxylate 3-dehydrogenase ERG26 and the 3-keto-steroid reductase ERG27, leads to the production of fecosterol via 4-methylfecosterol. ERG28 has a role as a scaffold to help anchor ERG25, ERG26 and ERG27 to the endoplasmic reticulum. The C-8 sterol isomerase ERG2 then catalyzes the reaction which results in unsaturation at C-7 in the B ring of sterols and thus converts fecosterol to episterol. The sterol-C5-desaturases ERG3A and ERG3BB then catalyze the introduction of a C-5 double bond in the B ring to produce 5-dehydroepisterol. The C-22 sterol desaturases ERG5A and ERG5B further convert 5-dehydroepisterol into ergosta-5,7,22,24(28)-tetraen-3beta-ol by forming the C-22(23) double bond in the sterol side chain. Finally, ergosta-5,7,22,24(28)-tetraen-3beta-ol is substrate of the C-24(28) sterol reductase ERG4 to produce ergosterol. This is Delta(14)-sterol reductase ERG24B from Gibberella zeae (strain ATCC MYA-4620 / CBS 123657 / FGSC 9075 / NRRL 31084 / PH-1) (Wheat head blight fungus).